A 398-amino-acid chain; its full sequence is Phosphomevalonate dehydratase large subunit (398 aa).

(R)-5-phosphomevalonate is bound by residues Gly-48, Val-49, Ser-50, Asn-76, and Pro-77. Cys-116 provides a ligand contact to [4Fe-4S] cluster. Positions 136 and 137 each coordinate (R)-5-phosphomevalonate. [4Fe-4S] cluster contacts are provided by Cys-287 and Cys-342. Lys-361 serves as a coordination point for (R)-5-phosphomevalonate.

This sequence belongs to the AcnX type II large subunit family. Heterodimer composed of a large subunit (PMDh-L) and a small subunit (PMDh-S). [4Fe-4S] cluster is required as a cofactor.

The catalysed reaction is (R)-5-phosphomevalonate = (2E)-3-methyl-5-phosphooxypent-2-enoate + H2O. The protein operates within isoprenoid biosynthesis; isopentenyl diphosphate biosynthesis via mevalonate pathway. Component of a hydro-lyase that catalyzes the dehydration of mevalonate 5-phosphate (MVA5P) to form trans-anhydromevalonate 5-phosphate (tAHMP). Involved in the archaeal mevalonate (MVA) pathway, which provides fundamental precursors for isoprenoid biosynthesis, such as isopentenyl diphosphate (IPP) and dimethylallyl diphosphate (DMAPP). The chain is Phosphomevalonate dehydratase large subunit from Methanosarcina mazei (strain ATCC BAA-159 / DSM 3647 / Goe1 / Go1 / JCM 11833 / OCM 88) (Methanosarcina frisia).